The sequence spans 240 residues: 2,3,4,5-tetrahydropyridine-2,6-dicarboxylate N-acetyltransferase (240 aa).

It belongs to the transferase hexapeptide repeat family. DapH subfamily.

The catalysed reaction is (S)-2,3,4,5-tetrahydrodipicolinate + acetyl-CoA + H2O = L-2-acetamido-6-oxoheptanedioate + CoA. Its pathway is amino-acid biosynthesis; L-lysine biosynthesis via DAP pathway; LL-2,6-diaminopimelate from (S)-tetrahydrodipicolinate (acetylase route): step 1/3. In terms of biological role, catalyzes the transfer of an acetyl group from acetyl-CoA to tetrahydrodipicolinate. In Bacillus cytotoxicus (strain DSM 22905 / CIP 110041 / 391-98 / NVH 391-98), this protein is 2,3,4,5-tetrahydropyridine-2,6-dicarboxylate N-acetyltransferase.